Reading from the N-terminus, the 251-residue chain is uncharacterized protein (251 aa).

The first 18 residues, 1-18, serve as a signal peptide directing secretion; the sequence is MRILIILSIILCSLSIRA.

The protein belongs to the MlaA family.

This is an uncharacterized protein from Rickettsia conorii (strain ATCC VR-613 / Malish 7).